Reading from the N-terminus, the 452-residue chain is MTAEQAINEGAFSLAASFGFVPLEYRGYEAEVLASKETAYIGTALNGAMSPIYDVTGPDALEFLRSVCINSFRGFQVGQIRHAVLCNDKGQILTDGVVARIDEDTYRTYWLAPALEYRLINSGLDVKGEDQSSNEFFFQLAGPRSLEVLEAAAHEDLHDIAFGRHRMSTIAGIPVRILRLGMAGGLAYEVHGAAADTETAYRAIWEAGQPFGLVKQGLNAYLMQHTEAGFPNINLHYPLPWYEDPDMAAFFDTRPTQNFYNKYRFFYGSVGPDAEARFVTPYQIGLGKMVDFNHDFIGKEALQREAEADHWAAVTLVWNEDDVADVVASKYRGRDVEPYDKIDDRPFDIYHNLGQPGFAYHADWVLADGERIGTSTGRINSVYYRRMISLGFIDKRHAAEGTELTVLWGRPGTPQKEIRVTVGRYPYFDLEKNNAIDVASIPRPALDVSAGA.

The protein belongs to the GcvT family. In terms of assembly, homotrimer.

The catalysed reaction is (+)-sesamin + (6S)-5,6,7,8-tetrahydrofolyl-(gamma-L-Glu)(n) = (+)-sesamin monocatechol + (6R)-5,10-methylenetetrahydrofolyl-(gamma-L-Glu)(n). The enzyme catalyses (+)-sesamin monocatechol + (6S)-5,6,7,8-tetrahydrofolyl-(gamma-L-Glu)(n) = (+)-sesamin dicatechol + (6R)-5,10-methylenetetrahydrofolyl-(gamma-L-Glu)(n). Its function is as follows. Converts sesamin into sesamin mono- and di-catechol. Catalyzes a ring cleavage to transfer the methylene group to tetrahydrofolate (THF). Also active with (+)-episesamin, (-)-asarinin, sesaminol, (+)-sesamolin and piperine. The polypeptide is Sesamin methylene transferase (Sinomonas sp. (strain No.22)).